A 42-amino-acid polypeptide reads, in one-letter code: Photosystem II reaction center protein J (42 aa).

The helical transmembrane segment at 10-30 (IPLWLVGTVVGTLALGLVALF) threads the bilayer.

This sequence belongs to the PsbJ family. In terms of assembly, PSII is composed of 1 copy each of membrane proteins PsbA, PsbB, PsbC, PsbD, PsbE, PsbF, PsbH, PsbI, PsbJ, PsbK, PsbL, PsbM, PsbT, PsbX, PsbY, PsbZ, Psb30/Ycf12, at least 3 peripheral proteins of the oxygen-evolving complex and a large number of cofactors. It forms dimeric complexes.

The protein resides in the plastid. It localises to the chloroplast thylakoid membrane. One of the components of the core complex of photosystem II (PSII). PSII is a light-driven water:plastoquinone oxidoreductase that uses light energy to abstract electrons from H(2)O, generating O(2) and a proton gradient subsequently used for ATP formation. It consists of a core antenna complex that captures photons, and an electron transfer chain that converts photonic excitation into a charge separation. The chain is Photosystem II reaction center protein J from Oltmannsiellopsis viridis (Marine flagellate).